Reading from the N-terminus, the 293-residue chain is Ribosomal protein L11 methyltransferase (293 aa).

Thr145, Gly166, Asp188, and Asn230 together coordinate S-adenosyl-L-methionine.

This sequence belongs to the methyltransferase superfamily. PrmA family.

It is found in the cytoplasm. The enzyme catalyses L-lysyl-[protein] + 3 S-adenosyl-L-methionine = N(6),N(6),N(6)-trimethyl-L-lysyl-[protein] + 3 S-adenosyl-L-homocysteine + 3 H(+). Functionally, methylates ribosomal protein L11. The protein is Ribosomal protein L11 methyltransferase of Shewanella halifaxensis (strain HAW-EB4).